The following is a 152-amino-acid chain: 3-hydroxyacyl-[acyl-carrier-protein] dehydratase FabZ (152 aa).

The active site involves His-57.

The protein belongs to the thioester dehydratase family. FabZ subfamily.

The protein resides in the cytoplasm. The catalysed reaction is a (3R)-hydroxyacyl-[ACP] = a (2E)-enoyl-[ACP] + H2O. Its function is as follows. Involved in unsaturated fatty acids biosynthesis. Catalyzes the dehydration of short chain beta-hydroxyacyl-ACPs and long chain saturated and unsaturated beta-hydroxyacyl-ACPs. The chain is 3-hydroxyacyl-[acyl-carrier-protein] dehydratase FabZ from Pasteurella multocida (strain Pm70).